The sequence spans 253 residues: Imidazole glycerol phosphate synthase subunit HisF (253 aa).

Residues Asp11 and Asp130 contribute to the active site.

The protein belongs to the HisA/HisF family. In terms of assembly, heterodimer of HisH and HisF.

The protein localises to the cytoplasm. The catalysed reaction is 5-[(5-phospho-1-deoxy-D-ribulos-1-ylimino)methylamino]-1-(5-phospho-beta-D-ribosyl)imidazole-4-carboxamide + L-glutamine = D-erythro-1-(imidazol-4-yl)glycerol 3-phosphate + 5-amino-1-(5-phospho-beta-D-ribosyl)imidazole-4-carboxamide + L-glutamate + H(+). It participates in amino-acid biosynthesis; L-histidine biosynthesis; L-histidine from 5-phospho-alpha-D-ribose 1-diphosphate: step 5/9. In terms of biological role, IGPS catalyzes the conversion of PRFAR and glutamine to IGP, AICAR and glutamate. The HisF subunit catalyzes the cyclization activity that produces IGP and AICAR from PRFAR using the ammonia provided by the HisH subunit. The sequence is that of Imidazole glycerol phosphate synthase subunit HisF from Geotalea uraniireducens (strain Rf4) (Geobacter uraniireducens).